The primary structure comprises 82 residues: Three-finger toxin MALT0063C (82 aa).

Residues 1–21 (MRTLLLTLVVVTIVCLDLGNS) form the signal peptide. 4 disulfides stabilise this stretch: Cys-24–Cys-42, Cys-35–Cys-60, Cys-64–Cys-72, and Cys-73–Cys-78.

It belongs to the three-finger toxin family. Short-chain subfamily. In terms of tissue distribution, expressed by the venom gland.

It localises to the secreted. The polypeptide is Three-finger toxin MALT0063C (Micrurus altirostris (Uruguayan coral snake)).